The chain runs to 152 residues: Large ribosomal subunit protein bL9 (152 aa).

Belongs to the bacterial ribosomal protein bL9 family.

In terms of biological role, binds to the 23S rRNA. The polypeptide is Large ribosomal subunit protein bL9 (Acaryochloris marina (strain MBIC 11017)).